Reading from the N-terminus, the 433-residue chain is 23S rRNA (uracil(1939)-C(5))-methyltransferase RlmD (433 aa).

The TRAM domain maps to 10-68; the sequence is RTTTRQIITVSVNDLDSFGQGVARHNGKTLFIPGLLPQENAEVTVTEDKKQYARAKVVR. 4 residues coordinate [4Fe-4S] cluster: Cys-81, Cys-87, Cys-90, and Cys-162. S-adenosyl-L-methionine-binding residues include Gln-265, Phe-294, Asn-299, Glu-315, Asn-342, and Asp-363. The active-site Nucleophile is the Cys-389.

Belongs to the class I-like SAM-binding methyltransferase superfamily. RNA M5U methyltransferase family. RlmD subfamily.

It catalyses the reaction uridine(1939) in 23S rRNA + S-adenosyl-L-methionine = 5-methyluridine(1939) in 23S rRNA + S-adenosyl-L-homocysteine + H(+). In terms of biological role, catalyzes the formation of 5-methyl-uridine at position 1939 (m5U1939) in 23S rRNA. The protein is 23S rRNA (uracil(1939)-C(5))-methyltransferase RlmD of Escherichia coli (strain UTI89 / UPEC).